The primary structure comprises 310 residues: Aspartate carbamoyltransferase catalytic subunit (310 aa).

Arginine 58 and threonine 59 together coordinate carbamoyl phosphate. Lysine 86 contacts L-aspartate. Residues arginine 108, histidine 136, and glutamine 139 each contribute to the carbamoyl phosphate site. Residues arginine 169 and arginine 224 each coordinate L-aspartate. Residues glycine 265 and proline 266 each contribute to the carbamoyl phosphate site.

The protein belongs to the aspartate/ornithine carbamoyltransferase superfamily. ATCase family. Heterododecamer (2C3:3R2) of six catalytic PyrB chains organized as two trimers (C3), and six regulatory PyrI chains organized as three dimers (R2).

The enzyme catalyses carbamoyl phosphate + L-aspartate = N-carbamoyl-L-aspartate + phosphate + H(+). It functions in the pathway pyrimidine metabolism; UMP biosynthesis via de novo pathway; (S)-dihydroorotate from bicarbonate: step 2/3. Its function is as follows. Catalyzes the condensation of carbamoyl phosphate and aspartate to form carbamoyl aspartate and inorganic phosphate, the committed step in the de novo pyrimidine nucleotide biosynthesis pathway. The chain is Aspartate carbamoyltransferase catalytic subunit from Geobacter sp. (strain M21).